Reading from the N-terminus, the 595-residue chain is Fructan 1-exohydrolase (595 aa).

The first 20 residues, methionine 1–serine 20, serve as a signal peptide directing secretion. Residue aspartate 74 is part of the active site. Asparagine 167, asparagine 235, and asparagine 247 each carry an N-linked (GlcNAc...) asparagine glycan. The cysteines at positions 445 and 491 are disulfide-linked. An N-linked (GlcNAc...) asparagine glycan is attached at asparagine 566.

This sequence belongs to the glycosyl hydrolase 32 family.

The catalysed reaction is Hydrolysis of terminal, non-reducing (2-&gt;1)-linked beta-D-fructofuranose residues in fructans.. With respect to regulation, inhibited by sucrose. Hydrolyzes inulin-type beta-(2,1)-fructans. May play a role as a beta-(2,1)-trimmer during graminan biosynthesis. This chain is Fructan 1-exohydrolase, found in Aegilops speltoides (Goatgrass).